Consider the following 111-residue polypeptide: Disintegrin DS-AN (111 aa).

A signal peptide spans 1–20; it reads MIQVLLVIICLAVFPYQGSC. Positions 21–47 are excised as a propeptide; sequence IILESGNVNDYEIVYPKKLIVLPTGAM. In terms of domain architecture, Disintegrin spans 47-111; that stretch reads MNSPHPCCDP…PDCPRNPYKD (65 aa). 4 cysteine pairs are disulfide-bonded: Cys-53/Cys-76, Cys-67/Cys-73, Cys-72/Cys-97, and Cys-85/Cys-104. The Cell attachment site motif lies at 89-91; it reads RGD.

As to quaternary structure, heterodimer; disulfide-linked.

The protein resides in the secreted. Inhibits ADP-induced platelet aggregation in human platelet-rich plasma (IC(50) is 8 uM). This is Disintegrin DS-AN from Atheris nitschei (Great lakes bush viper).